Here is a 2057-residue protein sequence, read N- to C-terminus: Fer-1-like protein 5 (2057 aa).

7 consecutive C2 domains span residues 1–99 (MLRL…VLFV), 152–265 (PGST…TLLR), 308–425 (DDTD…EGVY), 1057–1188 (DTRP…MRWH), 1213–1346 (KLGE…AQDY), 1467–1587 (PKPP…AHCG), and 1705–1853 (GPPG…KQCS). Residues Asp-1502, Asp-1508, Asp-1557, Phe-1558, Asp-1559, Ser-1562, Asp-1565, Asp-1824, Ser-1827, and Asp-1830 each contribute to the Ca(2+) site. The helical transmembrane segment at 1962 to 1982 (LIAFMVISIIALMLFNFIYSA) threads the bilayer.

This sequence belongs to the ferlin family. As to quaternary structure, interacts (via second C2 domain) with EHD1 and EHD2. Requires Ca(2+) as cofactor.

The protein resides in the cell membrane. It localises to the membrane. Functionally, plays a role in myoblast fusion; probable mediator of endocytic recycling for membrane trafficking events during myotube formation. In Homo sapiens (Human), this protein is Fer-1-like protein 5 (FER1L5).